The sequence spans 226 residues: Small ribosomal subunit protein uS3 (226 aa).

The 71-residue stretch at 39–109 (IYKFFDKFTR…KLDVNLKVLT (71 aa)) folds into the KH type-2 domain.

This sequence belongs to the universal ribosomal protein uS3 family. As to quaternary structure, part of the 30S ribosomal subunit. Forms a tight complex with proteins S10 and S14.

Its function is as follows. Binds the lower part of the 30S subunit head. Binds mRNA in the 70S ribosome, positioning it for translation. The protein is Small ribosomal subunit protein uS3 of Mycoplasmopsis synoviae (strain 53) (Mycoplasma synoviae).